Here is a 306-residue protein sequence, read N- to C-terminus: Aspartate carbamoyltransferase catalytic subunit (306 aa).

Carbamoyl phosphate contacts are provided by R55 and T56. Position 84 (K84) interacts with L-aspartate. 3 residues coordinate carbamoyl phosphate: R105, H133, and Q136. The L-aspartate site is built by R166 and R227. The carbamoyl phosphate site is built by L265 and P266.

It belongs to the aspartate/ornithine carbamoyltransferase superfamily. ATCase family. As to quaternary structure, heterododecamer (2C3:3R2) of six catalytic PyrB chains organized as two trimers (C3), and six regulatory PyrI chains organized as three dimers (R2).

The enzyme catalyses carbamoyl phosphate + L-aspartate = N-carbamoyl-L-aspartate + phosphate + H(+). It functions in the pathway pyrimidine metabolism; UMP biosynthesis via de novo pathway; (S)-dihydroorotate from bicarbonate: step 2/3. In terms of biological role, catalyzes the condensation of carbamoyl phosphate and aspartate to form carbamoyl aspartate and inorganic phosphate, the committed step in the de novo pyrimidine nucleotide biosynthesis pathway. In Neisseria gonorrhoeae (strain ATCC 700825 / FA 1090), this protein is Aspartate carbamoyltransferase catalytic subunit.